The following is a 346-amino-acid chain: Ribosomal RNA small subunit methyltransferase H (346 aa).

S-adenosyl-L-methionine is bound by residues 46 to 48 (GGY), D63, F90, D113, and Q120. The interval 270-346 (GGSAGSRHMP…LPETNELARS (77 aa)) is disordered.

This sequence belongs to the methyltransferase superfamily. RsmH family.

Its subcellular location is the cytoplasm. The enzyme catalyses cytidine(1402) in 16S rRNA + S-adenosyl-L-methionine = N(4)-methylcytidine(1402) in 16S rRNA + S-adenosyl-L-homocysteine + H(+). Specifically methylates the N4 position of cytidine in position 1402 (C1402) of 16S rRNA. The protein is Ribosomal RNA small subunit methyltransferase H of Brucella suis (strain ATCC 23445 / NCTC 10510).